The primary structure comprises 736 residues: Gephyrin (736 aa).

Residues 14 to 153 (QIRVGVLTVS…LPGSKKGSQE (140 aa)) are MPT Mo-transferase. Disordered regions lie at residues 181–232 (DELE…DSSS) and 260–290 (TASLSTTPSESPRAQATSRLSTASCPTPKVQ). The span at 187-199 (PSPPPPLSPPPTT) shows a compositional bias: pro residues. Residues 261–290 (ASLSTTPSESPRAQATSRLSTASCPTPKVQ) are compositionally biased toward polar residues. An MPT adenylyltransferase region spans residues 294–736 (SSKENILRAS…VVDVMVIGRL (443 aa)).

It in the N-terminal section; belongs to the MoaB/Mog family. The protein in the C-terminal section; belongs to the MoeA family. Homotrimer, homodimer and homooligomer. Interacts with glycine receptors. It depends on Mg(2+) as a cofactor.

Its subcellular location is the postsynaptic cell membrane. It is found in the cell membrane. The protein resides in the cytoplasm. The protein localises to the cytosol. It localises to the cytoskeleton. Its subcellular location is the cell projection. It is found in the dendrite. The protein resides in the postsynaptic density. The enzyme catalyses molybdopterin + ATP + H(+) = adenylyl-molybdopterin + diphosphate. The catalysed reaction is adenylyl-molybdopterin + molybdate = Mo-molybdopterin + AMP + H(+). Its pathway is cofactor biosynthesis; molybdopterin biosynthesis. Its function is as follows. Microtubule-associated protein involved in membrane protein-cytoskeleton interactions. It is thought to anchor the inhibitory glycine receptor (GLYR) to subsynaptic microtubules. Acts as a major instructive molecule at inhibitory synapses, where it also clusters GABA type A receptors. Also has a catalytic activity and catalyzes two steps in the biosynthesis of the molybdenum cofactor. In the first step, molybdopterin is adenylated. Subsequently, molybdate is inserted into adenylated molybdopterin and AMP is released. This is Gephyrin (GPHN) from Gallus gallus (Chicken).